Here is a 550-residue protein sequence, read N- to C-terminus: MTRYIFITGGVVSSLGKGLASAALGALLQARGYKVRLRKLDPYLNVDPGTMSPYQHGEVFVTDDGAETDLDLGHYERFTGVSATKADNITTGQIYKTIIEKERRGDYLGATVQVIPHVTNEIKDFILSPAMDETGAKPVDFVLVEIGGTVGDIEGLPFFEAIRQLRQDLPRNQSCYVHLTLLPFIKTAGEMKTKPTQHSVKELRSIGIQPDILLCRCEQEIPVEEKRKIAQFCNVRPSAVIQAMDSSSIYAVPIDYHQEGLDAEVLDVFGMHDAPKPDLSRWEAIDQTVNHPDGEVTIAVVGKYTVLKDAYKSLIEALHHGGLANKVKVNLDWVESETFEGDEGAAAARLENAHAIMVPGGFGERGAEGKIRAAQFARERKVPYFGICFGMQMAVIETLRNVAGIKDASSSEFGPTERPVVGIMTEWIKGNETVQRRANDDLGGTMRLGAYDAVLTPGSKVAQIYGGTAISERHRHRYEVNIGYAHRMEESGLKLTGRSPDGVLPEIVEREDHPWFIGVQYHPELKSRPFAPHPLFASFIAAAKEQGRLV.

The amidoligase domain stretch occupies residues 1–271; it reads MTRYIFITGG…DAEVLDVFGM (271 aa). S13 provides a ligand contact to CTP. Residue S13 participates in UTP binding. 14–19 serves as a coordination point for ATP; the sequence is SLGKGL. An L-glutamine-binding site is contributed by Y54. D71 provides a ligand contact to ATP. Residues D71 and E145 each coordinate Mg(2+). Residues 152–154, 192–197, and K228 contribute to the CTP site; these read DIE and KTKPTQ. UTP-binding positions include 192 to 197 and K228; that span reads KTKPTQ. Residues 297–549 enclose the Glutamine amidotransferase type-1 domain; sequence TIAVVGKYTV…IAAAKEQGRL (253 aa). G361 is a binding site for L-glutamine. The active-site Nucleophile; for glutamine hydrolysis is C388. L-glutamine contacts are provided by residues 389–392, E412, and R477; that span reads FGMQ. Residues H522 and E524 contribute to the active site.

The protein belongs to the CTP synthase family. As to quaternary structure, homotetramer.

The enzyme catalyses UTP + L-glutamine + ATP + H2O = CTP + L-glutamate + ADP + phosphate + 2 H(+). It carries out the reaction L-glutamine + H2O = L-glutamate + NH4(+). It catalyses the reaction UTP + NH4(+) + ATP = CTP + ADP + phosphate + 2 H(+). The protein operates within pyrimidine metabolism; CTP biosynthesis via de novo pathway; CTP from UDP: step 2/2. With respect to regulation, allosterically activated by GTP, when glutamine is the substrate; GTP has no effect on the reaction when ammonia is the substrate. The allosteric effector GTP functions by stabilizing the protein conformation that binds the tetrahedral intermediate(s) formed during glutamine hydrolysis. Inhibited by the product CTP, via allosteric rather than competitive inhibition. In terms of biological role, catalyzes the ATP-dependent amination of UTP to CTP with either L-glutamine or ammonia as the source of nitrogen. Regulates intracellular CTP levels through interactions with the four ribonucleotide triphosphates. This Caulobacter sp. (strain K31) protein is CTP synthase.